The sequence spans 291 residues: Protein ILRUN (291 aa).

The interval 199–291 (NTQPHRKVEG…LHGPYPFGQS (93 aa)) is disordered. Polar residues predominate over residues 212–228 (PFASPQKNRQSDENNLT). Phosphoserine occurs at positions 215, 222, and 265. Low complexity predominate over residues 257–276 (LSQSSVNLSPSSPANNLSVV).

As to quaternary structure, interacts with IRF3; the interaction inhibits IRF3 binding to its DNA consensus sequence.

The protein localises to the cytoplasm. It is found in the nucleus. Its function is as follows. Negative regulator of innate antiviral response. Blocks IRF3-dependent cytokine production such as IFNA, IFNB and TNF. Interacts with IRF3 and inhibits IRF3 recruitment to type I IFN promoter sequences while also reducing nuclear levels of the coactivators EP300 and CREBBP. The sequence is that of Protein ILRUN from Mus musculus (Mouse).